The chain runs to 1531 residues: Protein turtle (1531 aa).

At 1–858 (MGVCADLGSH…PARVKHKAIT (858 aa)) the chain is on the extracellular side. The segment at 19 to 44 (QHNTEKSKEQQQQSQPLEIPEQRASK) is disordered. Ig-like C2-type domains follow at residues 132-243 (PEDA…KNGT), 253-340 (PRFS…ARVI), 344-436 (GAVI…AYLS), 440-529 (PAKV…GVMD), and 536-624 (PAFT…MAVT). Cystine bridges form between Cys-150-Cys-227, Cys-275-Cys-324, Cys-366-Cys-419, Cys-462-Cys-513, and Cys-558-Cys-611. Fibronectin type-III domains follow at residues 632 to 728 (QPHA…TLED) and 760 to 851 (PPRN…VPAR). A helical transmembrane segment spans residues 859–879 (AGVVGGILFFIVAIILSVCAV). Over 880–1531 (KICNKRKRRK…QAMQQMESVC (652 aa)) the chain is Cytoplasmic. Disordered regions lie at residues 1248 to 1269 (EETR…VPLQ) and 1318 to 1395 (NLNL…SYPR). Over residues 1333–1349 (SPESRSSSSGFGSKNTS) the composition is skewed to low complexity. Polar residues predominate over residues 1380-1389 (QQAQGQTPHG).

The protein belongs to the immunoglobulin superfamily. Turtle family. As to quaternary structure, interacts with bdl. Exclusively expressed in the central nervous system.

The protein localises to the membrane. Essential protein that plays a role in the establishment of coordinated motor control. In the developing eye, involved in axonal targeting of the R7 photoreceptor. This is Protein turtle (tutl) from Drosophila melanogaster (Fruit fly).